Reading from the N-terminus, the 294-residue chain is Maltose/maltodextrin import ATP-binding protein MalK (294 aa).

Positions 4–233 (VQLRNVTKAW…PADRFVAGFI (230 aa)) constitute an ABC transporter domain. 36–43 (GPSGCGKS) is an ATP binding site.

Belongs to the ABC transporter superfamily. Maltooligosaccharide importer (TC 3.A.1.1.1) family. In terms of assembly, the complex is composed of two ATP-binding proteins (MalK), two transmembrane proteins (MalG and MalK) and a solute-binding protein (MalE).

It localises to the cell inner membrane. It carries out the reaction D-maltose(out) + ATP + H2O = D-maltose(in) + ADP + phosphate + H(+). Its function is as follows. Part of the ABC transporter complex MalEFGK involved in maltose/maltodextrin import. Responsible for energy coupling to the transport system. This is Maltose/maltodextrin import ATP-binding protein MalK from Klebsiella aerogenes (Enterobacter aerogenes).